Reading from the N-terminus, the 798-residue chain is Integrin beta-1 (798 aa).

A signal peptide spans 1–20 (MNLQLIFWIGLISSICCVFG). Residues 21-728 (QADENRCLKA…ETPECPTGPD (708 aa)) are Extracellular-facing. One can recognise a PSI domain in the interval 26 to 76 (RCLKANAKSCGECIQAGPNCGWCVNSTFLQEGMPTSARCDDLEALKKKGCH). 28 disulfides stabilise this stretch: C27–C45, C35–C464, C38–C64, C48–C75, C207–C213, C261–C301, C401–C415, C435–C462, C466–C486, C477–C489, C491–C500, C502–C533, C516–C531, C525–C536, C538–C553, C555–C576, C560–C574, C568–C579, C581–C590, C592–C615, C599–C613, C607–C618, C620–C630, C633–C636, C640–C691, C646–C665, C649–C661, and C699–C723. N50 carries an N-linked (GlcNAc...) asparagine glycan. The span at 75-91 (CHPDDIENPRGSKDVKK) shows a compositional bias: basic and acidic residues. Residues 75–107 (CHPDDIENPRGSKDVKKNKNVTNRSKGTAEKLQ) form a disordered region. N94 and N97 each carry an N-linked (GlcNAc...) asparagine glycan. In terms of domain architecture, VWFA spans 140–378 (DYPIDLYYLM…QLIIDAYNSL (239 aa)). Mg(2+) is bound by residues S152 and S154. Ca(2+) is bound by residues S154, D157, D158, and E189. Residues 207 to 213 (CTSEQNC) are CX3CL1-binding. N-linked (GlcNAc...) asparagine glycosylation is present at N212. Ca(2+)-binding residues include N244, D246, P248, and E249. E249 contacts Mg(2+). N269 carries an N-linked (GlcNAc...) asparagine glycan. A CX3CL1-binding region spans residues 295-314 (LPNDGQCHLENDVYTMSHYY). Position 362 (A362) interacts with Ca(2+). N-linked (GlcNAc...) asparagine glycans are attached at residues N363, N406, and N417. Residues 383 to 465 (ILENSKLPEG…IILQFICECE (83 aa)) are interaction with TMEM182. I-EGF domains are found at residues 466-501 (CQNE…RHCE), 502-554 (CSTD…KFCE), 555-591 (CDNF…SACD), and 592-631 (CSLD…PTCE). N481 is a glycosylation site (N-linked (GlcNAc...) asparagine). The N-linked (GlcNAc...) asparagine glycan is linked to N520. N-linked (GlcNAc...) asparagine glycosylation occurs at N584. N669 is a glycosylation site (N-linked (GlcNAc...) asparagine). A helical transmembrane segment spans residues 729 to 751 (IIPIVAGVVAGIVLIGLALLLIW). At 752–798 (KLLMIIHDTREFAKFEKEKMNAKWDTGENPIYKSAVTTVVNPKYEGK) the chain is on the cytoplasmic side. Positions 762-767 (EFAKFE) are signal for sorting from recycling endosomes; interaction with ACAP1. T777 is modified (phosphothreonine). Residue Y783 is modified to Phosphotyrosine. Residue S785 is modified to Phosphoserine. An interaction with ITGB1BP1 region spans residues 785–792 (SAVTTVVN). A Phosphothreonine modification is found at T789. K794 is modified (N6-acetyllysine; alternate). A Glycyl lysine isopeptide (Lys-Gly) (interchain with G-Cter in SUMO1); alternate cross-link involves residue K794.

This sequence belongs to the integrin beta chain family. As to quaternary structure, interacts with seprase FAP (seprase); the interaction occurs at the cell surface of invadopodia membrane in a collagen-dependent manner. Heterodimer of an alpha and a beta subunit. Beta-1 associates with either alpha-1, alpha-2, alpha-3, alpha-4, alpha-5, alpha-6, alpha-7, alpha-8, alpha-9, alpha-10, alpha-11 or alpha-V. ITGA6:ITGB1 is found in a complex with CD9; interaction takes place in oocytes and is involved in sperm-egg fusion. Binds LGALS3BP and NMRK2, when associated with alpha-7, but not with alpha-5. Interacts with FLNA, FLNB, FLNC and RANBP9. Interacts with KRT1 in the presence of RACK1 and SRC. Interacts with JAML; integrin alpha-4/beta-1 may regulate leukocyte to endothelial cells adhesion by controlling JAML homodimerization. Interacts with RAB21. Interacts (via the cytoplasmic region) with RAB25 (via the hypervariable C-terminal region). Interacts with MYO10. Interacts with ITGB1BP1 (via C-terminal region); the interaction is a prerequisite for focal adhesion disassembly. Interacts with TLN1; the interaction is prevented by competitive binding of ITGB1BP1. Interacts with ACAP1; required for ITGB1 recycling. Interacts with ASAP3. Interacts with FERMT2; the interaction is inhibited in presence of ITGB1BP1. Interacts with DAB2. Interacts with FGR and HCK. Interacts with alpha-7A and alpha-7B in adult skeletal muscle. Interacts with alpha-7B in cardiomyocytes of adult heart. Interacts with EMP2; the interaction may be direct or indirect and ITGB1 has a heterodimer form. ITGA5:ITGB1 interacts with CCN3. ITGA4:ITGB1 is found in a ternary complex with CX3CR1 and CX3CL1. ITGA5:ITGB1 interacts with FBN1. ITGA5:ITGB1 acts as a receptor for fibronectin FN1 and mediates R-G-D-dependent cell adhesion to FN1. ITGA5:ITGB1 interacts with IL1B. Interacts with MDK. ITGA4:ITGB1 interacts with MDK; this interaction mediates MDK-induced osteoblast cells migration through PXN phosphorylation. ITGA6:ITGB1 interacts with MDK; this interaction mediates MDK-induced neurite-outgrowth. ITGA5:ITGB1 interacts with ACE2. Interacts with TMEM182 and LAMB1. Interacts with tensin TNS3; TNS3 also interacts with PEAK1, thus acting as an adapter molecule to bridge the association of PEAK1 with ITGB1. Interacts with tensin TNS4; the interaction displaces tensin TNS3 from the ITGB1 cytoplasmic tail and promotes ITGB1 stability. Integrin ITGA9:ITGB1 interacts with SPP1/OPN (via N-terminus). Integrin ITGA9:ITGB1 interacts with TNC/TNFN3 (via the 3rd Fibronectin type-III domain). Integrins ITGA4:ITGB1 and ITGA9:ITGB1 interact with SVEP1 (via Sushi domain 21); thereby inhibit Ca(2+) intracellular signaling and as a result repress vasocontraction. ITGA4:ITGB1 and ITGA5:ITGB1 interacts with SELP. Interacts with CD248. ITGA5:ITGB1 interacts with IGFBP1. ITGA4:ITGB1 interacts with BCAM. Interacts with ADGRG6.

The protein localises to the cell membrane. The protein resides in the cell projection. It localises to the invadopodium membrane. Its subcellular location is the ruffle membrane. It is found in the recycling endosome. The protein localises to the melanosome. The protein resides in the lamellipodium. It localises to the ruffle. Its subcellular location is the cell junction. It is found in the focal adhesion. In terms of biological role, integrins alpha-1/beta-1, alpha-2/beta-1, alpha-10/beta-1 and alpha-11/beta-1 are receptors for collagen. Integrins alpha-1/beta-1 and alpha-2/beta-2 recognize the proline-hydroxylated sequence G-F-P-G-E-R in collagen. Integrins alpha-2/beta-1, alpha-3/beta-1, alpha-4/beta-1, alpha-5/beta-1, alpha-8/beta-1, alpha-10/beta-1, alpha-11/beta-1 and alpha-V/beta-1 are receptors for fibronectin. Alpha-4/beta-1 recognizes one or more domains within the alternatively spliced CS-1 and CS-5 regions of fibronectin. Integrin alpha-5/beta-1 is a receptor for fibrinogen. Integrin alpha-1/beta-1, alpha-2/beta-1, alpha-6/beta-1 and alpha-7/beta-1 are receptors for lamimin. Integrin alpha-6/beta-1 (ITGA6:ITGB1) is present in oocytes and is involved in sperm-egg fusion. Integrin alpha-4/beta-1 is a receptor for VCAM1 and recognizes the sequence Q-I-D-S in VCAM1. Integrin alpha-9/beta-1 is a receptor for VCAM1, cytotactin and osteopontin. It recognizes the sequence A-E-I-D-G-I-E-L in cytotactin. Integrin alpha-3/beta-1 is a receptor for epiligrin, thrombospondin and CSPG4. Integrin alpha-3/beta-1 provides a docking site for FAP (seprase) at invadopodia plasma membranes in a collagen-dependent manner and hence may participate in the adhesion, formation of invadopodia and matrix degradation processes, promoting cell invasion. Alpha-3/beta-1 may mediate with LGALS3 the stimulation by CSPG4 of endothelial cells migration. Integrin alpha-V/beta-1 is a receptor for vitronectin. Beta-1 integrins recognize the sequence R-G-D in a wide array of ligands. When associated with alpha-7/beta-1 integrin, regulates cell adhesion and laminin matrix deposition. Involved in promoting endothelial cell motility and angiogenesis. Involved in osteoblast compaction through the fibronectin fibrillogenesis cell-mediated matrix assembly process and the formation of mineralized bone nodules. May be involved in up-regulation of the activity of kinases such as PKC via binding to KRT1. Together with KRT1 and RACK1, serves as a platform for SRC activation or inactivation. Plays a mechanistic adhesive role during telophase, required for the successful completion of cytokinesis. ITGA4:ITGB1 binds to fractalkine (CX3CL1) and may act as its coreceptor in CX3CR1-dependent fractalkine signaling. ITGA4:ITGB1 and ITGA5:ITGB1 bind to PLA2G2A via a site (site 2) which is distinct from the classical ligand-binding site (site 1) and this induces integrin conformational changes and enhanced ligand binding to site 1. ITGA5:ITGB1 acts as a receptor for fibrillin-1 (FBN1) and mediates R-G-D-dependent cell adhesion to FBN1. ITGA5:ITGB1 is a receptor for IL1B and binding is essential for IL1B signaling. ITGA5:ITGB3 is a receptor for soluble CD40LG and is required for CD40/CD40LG signaling. Plays an important role in myoblast differentiation and fusion during skeletal myogenesis. ITGA9:ITGB1 may play a crucial role in SVEP1/polydom-mediated myoblast cell adhesion. Integrins ITGA9:ITGB1 and ITGA4:ITGB1 repress PRKCA-mediated L-type voltage-gated channel Ca(2+) influx and ROCK-mediated calcium sensitivity in vascular smooth muscle cells via their interaction with SVEP1, thereby inhibit vasocontraction. In Felis catus (Cat), this protein is Integrin beta-1 (ITGB1).